The following is a 102-amino-acid chain: Co-chaperonin GroES (102 aa).

Belongs to the GroES chaperonin family. In terms of assembly, heptamer of 7 subunits arranged in a ring. Interacts with the chaperonin GroEL.

The protein resides in the cytoplasm. In terms of biological role, together with the chaperonin GroEL, plays an essential role in assisting protein folding. The GroEL-GroES system forms a nano-cage that allows encapsulation of the non-native substrate proteins and provides a physical environment optimized to promote and accelerate protein folding. GroES binds to the apical surface of the GroEL ring, thereby capping the opening of the GroEL channel. This Streptomyces albus G protein is Co-chaperonin GroES.